Here is a 110-residue protein sequence, read N- to C-terminus: MMEVKAIHRGARISAQKTRLVADQIRGLPVDKALNVLTFSPKKAAGIVKKVVLSAIANAEHNEGADIDELKITSIYIDKAASLKRFTARAKGRGNRIEKQSCHITVTVGN.

It belongs to the universal ribosomal protein uL22 family. Part of the 50S ribosomal subunit.

This protein binds specifically to 23S rRNA; its binding is stimulated by other ribosomal proteins, e.g. L4, L17, and L20. It is important during the early stages of 50S assembly. It makes multiple contacts with different domains of the 23S rRNA in the assembled 50S subunit and ribosome. Its function is as follows. The globular domain of the protein is located near the polypeptide exit tunnel on the outside of the subunit, while an extended beta-hairpin is found that lines the wall of the exit tunnel in the center of the 70S ribosome. This Paraburkholderia phytofirmans (strain DSM 17436 / LMG 22146 / PsJN) (Burkholderia phytofirmans) protein is Large ribosomal subunit protein uL22.